A 159-amino-acid polypeptide reads, in one-letter code: ATP synthase subunit b (159 aa).

A helical membrane pass occupies residues 7–27 (VIFMTIINFCILVAILKHFFW).

The protein belongs to the ATPase B chain family. As to quaternary structure, F-type ATPases have 2 components, F(1) - the catalytic core - and F(0) - the membrane proton channel. F(1) has five subunits: alpha(3), beta(3), gamma(1), delta(1), epsilon(1). F(0) has three main subunits: a(1), b(2) and c(10-14). The alpha and beta chains form an alternating ring which encloses part of the gamma chain. F(1) is attached to F(0) by a central stalk formed by the gamma and epsilon chains, while a peripheral stalk is formed by the delta and b chains.

It localises to the cell membrane. Its function is as follows. F(1)F(0) ATP synthase produces ATP from ADP in the presence of a proton or sodium gradient. F-type ATPases consist of two structural domains, F(1) containing the extramembraneous catalytic core and F(0) containing the membrane proton channel, linked together by a central stalk and a peripheral stalk. During catalysis, ATP synthesis in the catalytic domain of F(1) is coupled via a rotary mechanism of the central stalk subunits to proton translocation. Component of the F(0) channel, it forms part of the peripheral stalk, linking F(1) to F(0). This Clostridium botulinum (strain Alaska E43 / Type E3) protein is ATP synthase subunit b.